The sequence spans 91 residues: Small ribosomal subunit protein bS20 (91 aa).

This sequence belongs to the bacterial ribosomal protein bS20 family.

In terms of biological role, binds directly to 16S ribosomal RNA. The protein is Small ribosomal subunit protein bS20 of Acidithiobacillus ferrooxidans (strain ATCC 23270 / DSM 14882 / CIP 104768 / NCIMB 8455) (Ferrobacillus ferrooxidans (strain ATCC 23270)).